Here is a 263-residue protein sequence, read N- to C-terminus: HTH-type transcriptional repressor NanR (263 aa).

Positions 1 to 22 are disordered; it reads MGLMNAFDSQTEDSSPAIGRNL. An HTH gntR-type domain is found at 30-98; sequence KKLSEMVEEE…NGERARVSRP (69 aa). A DNA-binding region (H-T-H motif) is located at residues 58 to 77; sequence ERELMAFFNVGRPSVREALA.

Belongs to the NanR family.

Its function is as follows. Transcriptional repressor that controls expression of the genes required for the catabolism of sialic acids. This chain is HTH-type transcriptional repressor NanR, found in Escherichia coli (strain 55989 / EAEC).